The chain runs to 154 residues: 6,7-dimethyl-8-ribityllumazine synthase (154 aa).

5-amino-6-(D-ribitylamino)uracil-binding positions include F22, 56–58, and 81–83; these read SFE and VLI. 86–87 is a (2S)-2-hydroxy-3-oxobutyl phosphate binding site; it reads ET. H89 serves as the catalytic Proton donor. F114 serves as a coordination point for 5-amino-6-(D-ribitylamino)uracil. R128 contributes to the (2S)-2-hydroxy-3-oxobutyl phosphate binding site.

This sequence belongs to the DMRL synthase family.

It catalyses the reaction (2S)-2-hydroxy-3-oxobutyl phosphate + 5-amino-6-(D-ribitylamino)uracil = 6,7-dimethyl-8-(1-D-ribityl)lumazine + phosphate + 2 H2O + H(+). It functions in the pathway cofactor biosynthesis; riboflavin biosynthesis; riboflavin from 2-hydroxy-3-oxobutyl phosphate and 5-amino-6-(D-ribitylamino)uracil: step 1/2. Catalyzes the formation of 6,7-dimethyl-8-ribityllumazine by condensation of 5-amino-6-(D-ribitylamino)uracil with 3,4-dihydroxy-2-butanone 4-phosphate. This is the penultimate step in the biosynthesis of riboflavin. This is 6,7-dimethyl-8-ribityllumazine synthase from Chlamydia caviae (strain ATCC VR-813 / DSM 19441 / 03DC25 / GPIC) (Chlamydophila caviae).